The chain runs to 1055 residues: RapA guanosine triphosphatase-activating protein 1 (1055 aa).

6 disordered regions span residues 76 to 100, 256 to 292, 418 to 525, 544 to 570, 603 to 629, and 943 to 969; these read LSPQ…EEER, NHQP…SSLT, QQLL…FLGV, THAT…SPPL, TTQL…PPSE, and NNNS…NLPT. The span at 89 to 100 shows a compositional bias: basic and acidic residues; that stretch reads QHEKITPEEEER. Low complexity-rich tracts occupy residues 262-292, 442-455, and 469-482; these read STPR…SSLT, DFNL…NNNN, and TTTT…NNNN. Residues 483 to 494 are compositionally biased toward polar residues; the sequence is ISPQHSGTSGSP. 2 stretches are compositionally biased toward low complexity: residues 603-622 and 943-966; these read TTQL…TSQP and NNNS…SDSN. Residues 779 to 1048 enclose the Rap-GAP domain; that stretch reads LIQFEAKNIH…RTRKEFLHSF (270 aa).

It is found in the cytoplasm. The protein localises to the cell cortex. Its function is as follows. Mediates the deactivation of rap1 and plays an important role in spatially and temporally regulating cell adhesion and chemotaxis by controlling attachment disassembly in the leading edge through the regulation of myosin II assembly and disassembly. Overexpression leads to defective chemotaxis. This Dictyostelium discoideum (Social amoeba) protein is RapA guanosine triphosphatase-activating protein 1 (rapgap1).